A 332-amino-acid chain; its full sequence is Methylthioribose-1-phosphate isomerase (332 aa).

Residues 44–46 (RGA), arginine 87, and glutamine 192 each bind substrate. The active-site Proton donor is aspartate 233. 243–244 (NK) lines the substrate pocket.

Belongs to the eIF-2B alpha/beta/delta subunits family. MtnA subfamily.

It catalyses the reaction 5-(methylsulfanyl)-alpha-D-ribose 1-phosphate = 5-(methylsulfanyl)-D-ribulose 1-phosphate. The protein operates within amino-acid biosynthesis; L-methionine biosynthesis via salvage pathway; L-methionine from S-methyl-5-thio-alpha-D-ribose 1-phosphate: step 1/6. In terms of biological role, catalyzes the interconversion of methylthioribose-1-phosphate (MTR-1-P) into methylthioribulose-1-phosphate (MTRu-1-P). In Dehalococcoides mccartyi (strain CBDB1), this protein is Methylthioribose-1-phosphate isomerase.